The sequence spans 514 residues: Calcium-binding mitochondrial carrier protein SCaMC-2 (514 aa).

Residues 1–234 are Mitochondrial intermembrane-facing; it reads MARPRSLVSP…EKQTGMWWRH (234 aa). 4 consecutive EF-hand domains span residues 56 to 91, 92 to 122, 123 to 158, and 159 to 194; these read EHER…LGVH, RTEL…HYLR, DHEK…LGVN, and ISEQ…HSAE. Residues aspartate 69, asparagine 71, aspartate 73, aspartate 80, aspartate 105, aspartate 107, aspartate 109, glutamine 111, and glutamate 116 each contribute to the Ca(2+) site. Solcar repeat units lie at residues 229–315, 323–408, and 420–508; these read GMWW…IKRI, LGIH…LKNA, and PGVF…LKLT. A helical transmembrane segment spans residues 235-252; that stretch reads LVAGGGAGAVSRTCTAPL. Over 253–289 the chain is Mitochondrial matrix; that stretch reads DRLKVLMQVHASRSNNMSILGGFTHMIREGGFRSLWR. A helical transmembrane segment spans residues 290-309; that stretch reads GNGINVIKIAPESAIKFMAY. Topologically, residues 310-332 are mitochondrial intermembrane; that stretch reads EQIKRIIGSNQETLGIHERFVAG. A helical membrane pass occupies residues 333 to 346; sequence SLAGVIAQSSIYPM. Over 347 to 382 the chain is Mitochondrial matrix; it reads EVLKTRMALRKTGQYQGVLDCGKKILLQEGLSAFYK. A helical transmembrane segment spans residues 383–402; it reads GYVPNMLGIIPYAGIDLAVY. At 403-425 the chain is on the mitochondrial intermembrane side; that stretch reads ETLKNAWLQRYATSSADPGVFVL. The helical transmembrane segment at 426-443 threads the bilayer; sequence LACGTVSSTCGQLASYPL. The Mitochondrial matrix portion of the chain corresponds to 444-482; sequence ALVRTRMQAEASVEGAPQMTMSKLFKHIVKTEGAFGLYR. A helical transmembrane segment spans residues 483 to 502; sequence GLAPNFMKVIPAVSISYVVY. Residues 503 to 514 lie on the Mitochondrial intermembrane side of the membrane; that stretch reads ENLKLTLGVQSR.

It belongs to the mitochondrial carrier (TC 2.A.29) family.

It is found in the mitochondrion inner membrane. In terms of biological role, calcium-dependent mitochondrial solute carrier. This Xenopus laevis (African clawed frog) protein is Calcium-binding mitochondrial carrier protein SCaMC-2 (slc25a25).